A 441-amino-acid chain; its full sequence is MPQPSLSSLYSDHLRTLTARADEALQRGGFEHLVVPSGSTHYQLFDDRDYPYAVNPQFKAWVPLTRVPDSWLVYTPGKRPTVIFYQPFDYWHVVPDAPSGWWVDHCDIHIIRTPDQALALLPKHAERCAILGEPHSTLGAYVPNNPQPVLDYLEYQRAFKTPYELALLRIAQQLAVRGHRAAEAAFRAGQSEFGIHMAYCAAVGQDANDLPYGNIIALNEHGAVLHYTELGQQPPQPLRSFLIDAGASAYGYASDITRTYAADPDSDFQALIDAVDAAQLRMGQNVRAGVDYKQLHIDAHLALMGILKEFGILTVSPEAALATGVSAAFFPHGLGHLIGLQVHDVAGFAASDRGGRIERPPGHPYLRLTRVLEPGMVVTIEPGVYFIDMLLDEVKKNGHAASVDWQRVEAFKPYGGIRIEDEVVCTDGSAENLTRPVFAAA.

Mn(2+)-binding residues include aspartate 244, aspartate 255, histidine 336, glutamate 381, and glutamate 420.

This sequence belongs to the peptidase M24B family. Bacterial-type prolidase subfamily. Requires Mn(2+) as cofactor.

It catalyses the reaction Xaa-L-Pro dipeptide + H2O = an L-alpha-amino acid + L-proline. In terms of biological role, splits dipeptides with a prolyl residue in the C-terminal position. The protein is Xaa-Pro dipeptidase of Xanthomonas axonopodis pv. citri (strain 306).